Here is a 341-residue protein sequence, read N- to C-terminus: MKEKILLGGYTKRVSKGVYSVLLDSKKAELSALTEVAAVQNPTYITLDQKGHLYTCAADGNGGGIAAFDFDGQNTTHLGNVTSTGAPLCYVAVDEARQLVYGANYHLGEVRVYKIQADGSLRLTDTVKHNGSGPRPEQASSHVHYSDLTPDGRLVTCDLGTDEVTVYDVIGEGKLNIVTIYRAEKGMGARHISFHPNGKIAYLVGELNSTIEVLSYNEEKGRFARLQTISTLPEDYHGANGVAAIRISSDGKFLYASNRGHDSLAIYKVSPLGTKLESIGWTKTEGHIPRDFNFNKTEDYIIVAHQESDNLTLFLRDKNTGSLTLEQKDFYAPEITCVLPL.

A disordered region spans residues 125-146; the sequence is DTVKHNGSGPRPEQASSHVHYS.

The protein belongs to the cycloisomerase 2 family.

This is an uncharacterized protein from Lactococcus lactis subsp. cremoris (strain MG1363).